A 282-amino-acid polypeptide reads, in one-letter code: Protein canopy homolog 3 (282 aa).

Residues 1 to 33 (MEPLPEPASGPRPRPHRLLLLSLLLLLLPLLPA) form the signal peptide. The 223-residue stretch at 53 to 275 (SKCEVCKYVA…EGIQKASPLT (223 aa)) folds into the Saposin B-type domain. Cystine bridges form between C55–C212, C58–C200, and C110–C172. N159 is a glycosylation site (N-linked (GlcNAc...) asparagine). Positions 159 to 185 (NETSAEVADLKKQCDVLVEEFEEVIED) form a coiled coil. The interval 221–282 (KGDTAALGGK…PLTHSPPDEL (62 aa)) is disordered. Residues 255 to 266 (DLDGDPSPEEDE) show a composition bias toward acidic residues.

It belongs to the canopy family. In terms of assembly, interacts with HSP90B1; this interaction is disrupted in the presence of ATP. Interacts with TLR1, TLR2, TLR4 and TLR9.

It localises to the endoplasmic reticulum. Its function is as follows. Toll-like receptor (TLR)-specific co-chaperone for HSP90B1. Required for proper TLR folding, except that of TLR3, and hence controls TLR exit from the endoplasmic reticulum. Consequently, required for both innate and adaptive immune responses. This is Protein canopy homolog 3 (CNPY3) from Bos taurus (Bovine).